The following is a 407-amino-acid chain: SERPINE1 mRNA-binding protein 1 (407 aa).

Phosphoserine is present on Ser-25. The interval 33–227 (AAENKKKEAG…GSGSHNWGTV (195 aa)) is disordered. A compositionally biased stretch (low complexity) spans 51–68 (AKSAAQAAAQTNSNAAGK). Position 52 is an N6-acetyllysine; alternate (Lys-52). Lys-52 participates in a covalent cross-link: Glycyl lysine isopeptide (Lys-Gly) (interchain with G-Cter in SUMO1); alternate. Lys-68 carries the N6-acetyllysine modification. Basic and acidic residues-rich tracts occupy residues 70–80 (LRKESQKDRKN), 89–114 (VDKK…RRPD), and 122–162 (KIID…DRPI). Lys-102 is covalently cross-linked (Glycyl lysine isopeptide (Lys-Gly) (interchain with G-Cter in SUMO1); alternate). A Glycyl lysine isopeptide (Lys-Gly) (interchain with G-Cter in SUMO2) cross-link involves residue Lys-102. Lys-102 is covalently cross-linked (Glycyl lysine isopeptide (Lys-Gly) (interchain with G-Cter in SUMO2); alternate). N6-acetyllysine occurs at positions 122 and 140. Residues 164–182 (GRGGLGRGRGGRGRGMGRG) show a composition bias toward gly residues. 2 positions are modified to omega-N-methylarginine: Arg-165 and Arg-188. Residues 183 to 199 (DGFDSRGKREFDRHSGS) are compositionally biased toward basic and acidic residues. A phosphoserine mark is found at Ser-197, Ser-199, Ser-203, Ser-205, and Ser-208. Lys-211 bears the N6-acetyllysine; alternate mark. Lys-211 participates in a covalent cross-link: Glycyl lysine isopeptide (Lys-Gly) (interchain with G-Cter in SUMO2); alternate. Arg-216 carries the post-translational modification Omega-N-methylarginine. Ser-221 is modified (phosphoserine). At Thr-226 the chain carries Phosphothreonine. Lys-228 is covalently cross-linked (Glycyl lysine isopeptide (Lys-Gly) (interchain with G-Cter in SUMO1); alternate). Lys-228 is covalently cross-linked (Glycyl lysine isopeptide (Lys-Gly) (interchain with G-Cter in SUMO2); alternate). Residue Ser-234 is modified to Phosphoserine. A compositionally biased stretch (polar residues) spans 242–256 (ISYNCSDLDQSNVTE). 2 disordered regions span residues 242-291 (ISYN…TLDE) and 327-407 (SKSE…PALA). Basic and acidic residues predominate over residues 261-274 (GEEHPVADTENKEN). Residue Lys-280 forms a Glycyl lysine isopeptide (Lys-Gly) (interchain with G-Cter in SUMO1); alternate linkage. A Glycyl lysine isopeptide (Lys-Gly) (interchain with G-Cter in SUMO2) cross-link involves residue Lys-280. A Glycyl lysine isopeptide (Lys-Gly) (interchain with G-Cter in SUMO2); alternate cross-link involves residue Lys-280. Composition is skewed to basic and acidic residues over residues 281–291 (EEGPKEMTLDE) and 327–341 (SKSE…VMDH). Residue Lys-328 is modified to N6-acetyllysine. Ser-329 is subject to Phosphoserine. A compositionally biased stretch (gly residues) spans 362–371 (GRPGRGGRGG). Arg-363, Arg-366, and Arg-369 each carry omega-N-methylarginine. A phosphoserine mark is found at Ser-391 and Ser-393.

This sequence belongs to the SERBP1-HABP4 family. In terms of assembly, associates with mature 80S ribosomes. Interacts with EEF2/eEF2; interaction sequesters EEF2/eEF2 at the A-site of the ribosome, thereby blocking the interaction sites of the mRNA-tRNA complex, promoting ribosome stabilization and hibernation. Interacts with SPIN1. Interacts with CHD3 and TDRD3. Interacts with ZDHHC17 (via ANK repeats). In terms of processing, phosphorylation by MTOR inhibits SERBP1 and relieves ribosome hibernation.

Its function is as follows. Ribosome-binding protein that promotes ribosome hibernation, a process during which ribosomes are stabilized in an inactive state and preserved from proteasomal degradation. Acts via its association with EEF2/eEF2 factor, sequestering EEF2/eEF2 at the A-site of the ribosome and promoting ribosome stabilization and storage in an inactive state. May also play a role in the regulation of mRNA stability: binds to the 3'-most 134 nt of the SERPINE1/PAI1 mRNA, a region which confers cyclic nucleotide regulation of message decay. Seems to play a role in PML-nuclear bodies formation. This is SERPINE1 mRNA-binding protein 1 from Oryctolagus cuniculus (Rabbit).